The chain runs to 82 residues: Bowman-Birk type proteinase inhibitor (82 aa).

The segment at 1-24 (SGHHDETTDEPSESSKPCCDQCSC) is disordered. Cystine bridges form between Cys18–Cys72, Cys19–Cys34, Cys22–Cys68, Cys24–Cys32, Cys42–Cys49, Cys46–Cys61, and Cys51–Cys59.

It belongs to the Bowman-Birk serine protease inhibitor family.

Its function is as follows. Trypsin and chymotrypsin are inhibited simultaneously. There are two separate reactive sites for trypsin and chymotrypsin but they do not inhibit simultaneously. The protein is Bowman-Birk type proteinase inhibitor of Phaseolus angularis (Azuki bean).